Here is a 278-residue protein sequence, read N- to C-terminus: Extracellular metalloprotease GLRG_06511 (278 aa).

The first 19 residues, 1 to 19 (MQFKSLLVSALAAASTALA), serve as a signal peptide directing secretion. N51 carries an N-linked (GlcNAc...) asparagine glycan. Position 190 (H190) interacts with Zn(2+). E191 is a catalytic residue. Zn(2+) is bound at residue H194. C227 and C254 are disulfide-bonded.

The protein belongs to the peptidase M43B family.

The protein localises to the secreted. In terms of biological role, secreted metalloproteinase that allows assimilation of proteinaceous substrates. The polypeptide is Extracellular metalloprotease GLRG_06511 (Colletotrichum graminicola (strain M1.001 / M2 / FGSC 10212) (Maize anthracnose fungus)).